The sequence spans 364 residues: Probable endopolygalacturonase B (364 aa).

The signal sequence occupies residues 1-20; sequence MHFFQSSLVAATMGAALVAA. Residues 21–29 constitute a propeptide that is removed on maturation; the sequence is APAADLETR. Cysteine 32 and cysteine 47 form a disulfide bridge. N-linked (GlcNAc...) asparagine glycans are attached at residues asparagine 138 and asparagine 141. PbH1 repeat units lie at residues 159–188, 189–210, 211–231, 240–261, 269–291, and 303–324; these read SDHL…DVGS, STYI…AVNS, GEHI…SIGS, VNDV…RIKT, VTGV…VVQQ, and TNGV…TSSA. The Proton donor role is filled by aspartate 203. An intrachain disulfide couples cysteine 205 to cysteine 221. Residue histidine 225 is part of the active site. Cysteine 331 and cysteine 336 are oxidised to a cystine. Asparagine 338 carries an N-linked (GlcNAc...) asparagine glycan. Cysteine 355 and cysteine 364 form a disulfide bridge.

It belongs to the glycosyl hydrolase 28 family.

It localises to the secreted. The catalysed reaction is (1,4-alpha-D-galacturonosyl)n+m + H2O = (1,4-alpha-D-galacturonosyl)n + (1,4-alpha-D-galacturonosyl)m.. In terms of biological role, involved in maceration and soft-rotting of plant tissue. Hydrolyzes the 1,4-alpha glycosidic bonds of de-esterified pectate in the smooth region of the plant cell wall. The sequence is that of Probable endopolygalacturonase B (pgaB) from Aspergillus fumigatus (strain ATCC MYA-4609 / CBS 101355 / FGSC A1100 / Af293) (Neosartorya fumigata).